Here is a 382-residue protein sequence, read N- to C-terminus: Galactokinase (382 aa).

34–37 (EHTD) is a binding site for substrate. ATP is bound at residue 124-130 (GAGLSSS). 2 residues coordinate Mg(2+): serine 130 and glutamate 162. Aspartate 174 acts as the Proton acceptor in catalysis. Tyrosine 223 contacts substrate.

This sequence belongs to the GHMP kinase family. GalK subfamily.

The protein localises to the cytoplasm. The catalysed reaction is alpha-D-galactose + ATP = alpha-D-galactose 1-phosphate + ADP + H(+). Its pathway is carbohydrate metabolism; galactose metabolism. In terms of biological role, catalyzes the transfer of the gamma-phosphate of ATP to D-galactose to form alpha-D-galactose-1-phosphate (Gal-1-P). In Cronobacter sakazakii (strain ATCC BAA-894) (Enterobacter sakazakii), this protein is Galactokinase.